We begin with the raw amino-acid sequence, 178 residues long: NADH-ubiquinone oxidoreductase chain 6 (178 aa).

5 helical membrane-spanning segments follow: residues 1-21, 25-45, 48-68, 89-109, and 152-172; these read MMTY…VGFS, SPIY…GIVL, GGSF…LVVF, VLLT…YLLL, and YGYW…IVVM.

The protein belongs to the complex I subunit 6 family.

The protein localises to the mitochondrion membrane. It catalyses the reaction a ubiquinone + NADH + 5 H(+)(in) = a ubiquinol + NAD(+) + 4 H(+)(out). In terms of biological role, core subunit of the mitochondrial membrane respiratory chain NADH dehydrogenase (Complex I) that is believed to belong to the minimal assembly required for catalysis. Complex I functions in the transfer of electrons from NADH to the respiratory chain. The immediate electron acceptor for the enzyme is believed to be ubiquinone. The sequence is that of NADH-ubiquinone oxidoreductase chain 6 (MT-ND6) from Pseudosoriculus fumidus (Taiwanese brown-toothed shrew).